Here is a 307-residue protein sequence, read N- to C-terminus: 4-hydroxy-tetrahydrodipicolinate synthase (307 aa).

Threonine 57 lines the pyruvate pocket. Tyrosine 145 functions as the Proton donor/acceptor in the catalytic mechanism. Lysine 173 (schiff-base intermediate with substrate) is an active-site residue. Residue valine 215 participates in pyruvate binding.

Belongs to the DapA family. In terms of assembly, homotetramer; dimer of dimers.

It is found in the cytoplasm. The catalysed reaction is L-aspartate 4-semialdehyde + pyruvate = (2S,4S)-4-hydroxy-2,3,4,5-tetrahydrodipicolinate + H2O + H(+). It functions in the pathway amino-acid biosynthesis; L-lysine biosynthesis via DAP pathway; (S)-tetrahydrodipicolinate from L-aspartate: step 3/4. In terms of biological role, catalyzes the condensation of (S)-aspartate-beta-semialdehyde [(S)-ASA] and pyruvate to 4-hydroxy-tetrahydrodipicolinate (HTPA). The chain is 4-hydroxy-tetrahydrodipicolinate synthase from Leptospira interrogans serogroup Icterohaemorrhagiae serovar copenhageni (strain Fiocruz L1-130).